The sequence spans 208 residues: Nascent polypeptide-associated complex subunit alpha (208 aa).

Residues 1 to 19 (MSSSRIEELPDDDVPKTTV) are compositionally biased toward basic and acidic residues. Disordered regions lie at residues 1–50 (MSSS…HSRN) and 120–166 (QLAA…VFDA). Acidic residues predominate over residues 21-34 (DAADSSESEVEGAE). The region spanning 48 to 113 (SRNEKKARKA…AKIEDLNSQA (66 aa)) is the NAC-A/B domain. Over residues 120 to 131 (QLAAAEAAGSNE) the composition is skewed to low complexity. Positions 132–154 (HAGHDHASHDHGKGKAVESADKK) are enriched in basic and acidic residues. Acidic residues predominate over residues 155-164 (DEEEDDEEVF). The UBA domain occupies 169-208 (LEAKDIELVMAQASVSRNKAIKALKENDNDIVNSIMALSV).

The protein belongs to the NAC-alpha family. As to quaternary structure, part of the nascent polypeptide-associated complex (NAC), consisting of EGD2 and EGD1. NAC associates with ribosomes via EGD1.

It localises to the cytoplasm. It is found in the nucleus. Functionally, component of the nascent polypeptide-associated complex (NAC), a dynamic component of the ribosomal exit tunnel, protecting the emerging polypeptides from interaction with other cytoplasmic proteins to ensure appropriate nascent protein targeting. The NAC complex also promotes mitochondrial protein import by enhancing productive ribosome interactions with the outer mitochondrial membrane and blocks the inappropriate interaction of ribosomes translating non-secretory nascent polypeptides with translocation sites in the membrane of the endoplasmic reticulum. EGD2 may also be involved in transcription regulation. This chain is Nascent polypeptide-associated complex subunit alpha (EGD2), found in Ajellomyces capsulatus (strain NAm1 / WU24) (Darling's disease fungus).